A 33-amino-acid chain; its full sequence is Protamine (33 aa).

The segment at 1-33 (MPRRRRSSSRPVRRRRRPRVSRRRRRRGGRRRR) is disordered.

As to expression, testis.

It is found in the nucleus. It localises to the chromosome. Protamines substitute for histones in the chromatin of sperm during the haploid phase of spermatogenesis. They compact sperm DNA into a highly condensed, stable and inactive complex. In Oncorhynchus keta (Chum salmon), this protein is Protamine.